A 434-amino-acid polypeptide reads, in one-letter code: Homogentisate 1,2-dioxygenase (434 aa).

The active-site Proton acceptor is the H289. Residues H332 and E338 each contribute to the Fe cation site. Homogentisate-binding residues include Y347 and H368. H368 is a Fe cation binding site.

The protein belongs to the homogentisate dioxygenase family. In terms of assembly, hexamer; dimer of trimers. Fe cation serves as cofactor.

It carries out the reaction homogentisate + O2 = 4-maleylacetoacetate + H(+). The protein operates within amino-acid degradation; L-phenylalanine degradation; acetoacetate and fumarate from L-phenylalanine: step 4/6. Its function is as follows. Involved in the catabolism of homogentisate (2,5-dihydroxyphenylacetate or 2,5-OH-PhAc), a central intermediate in the degradation of phenylalanine and tyrosine. Catalyzes the oxidative ring cleavage of the aromatic ring of homogentisate to yield maleylacetoacetate. This Pseudomonas syringae pv. tomato (strain ATCC BAA-871 / DC3000) protein is Homogentisate 1,2-dioxygenase.